Consider the following 308-residue polypeptide: Ribosomal RNA small subunit methyltransferase H (308 aa).

Residues 36-38 (GGH), Asp55, Phe86, Asp103, and Gln110 contribute to the S-adenosyl-L-methionine site.

This sequence belongs to the methyltransferase superfamily. RsmH family.

The protein resides in the cytoplasm. The enzyme catalyses cytidine(1402) in 16S rRNA + S-adenosyl-L-methionine = N(4)-methylcytidine(1402) in 16S rRNA + S-adenosyl-L-homocysteine + H(+). Specifically methylates the N4 position of cytidine in position 1402 (C1402) of 16S rRNA. This chain is Ribosomal RNA small subunit methyltransferase H, found in Helicobacter pylori (strain P12).